We begin with the raw amino-acid sequence, 192 residues long: dCTP deaminase, dUMP-forming (192 aa).

Residues 101 to 106 (KSSLGR), Asp119, 127 to 129 (TLE), Gln148, Tyr162, and Gln174 each bind dCTP. The active-site Proton donor/acceptor is Glu129. The tract at residues 171–192 (YQGQRGPTPSRSWQSWHTWPTR) is disordered.

This sequence belongs to the dCTP deaminase family. Homotrimer.

It catalyses the reaction dCTP + 2 H2O = dUMP + NH4(+) + diphosphate. The protein operates within pyrimidine metabolism; dUMP biosynthesis; dUMP from dCTP: step 1/1. Bifunctional enzyme that catalyzes both the deamination of dCTP to dUTP and the hydrolysis of dUTP to dUMP without releasing the toxic dUTP intermediate. This chain is dCTP deaminase, dUMP-forming, found in Salinispora arenicola (strain CNS-205).